We begin with the raw amino-acid sequence, 505 residues long: Deoxyguanosinetriphosphate triphosphohydrolase (505 aa).

One can recognise an HD domain in the interval 66-273; sequence RLTHSMEVQQ…MEAADDISYC (208 aa).

It belongs to the dGTPase family. Type 1 subfamily. As to quaternary structure, homotetramer. Requires Mg(2+) as cofactor.

The catalysed reaction is dGTP + H2O = 2'-deoxyguanosine + triphosphate + H(+). Its function is as follows. dGTPase preferentially hydrolyzes dGTP over the other canonical NTPs. The sequence is that of Deoxyguanosinetriphosphate triphosphohydrolase from Salmonella enteritidis PT4 (strain P125109).